The chain runs to 697 residues: Polyribonucleotide nucleotidyltransferase (697 aa).

Asp-489 and Asp-495 together coordinate Mg(2+). Residues 556 to 615 (PRIETIKIKPDKIREVIGSGGKVIRGITEATGVKIEIQDDGTINIASADPEATKKAIAMI) enclose the KH domain. An S1 motif domain is found at 625 to 693 (GKTYKGRIVK…RSGRVKLSRK (69 aa)).

Belongs to the polyribonucleotide nucleotidyltransferase family. Requires Mg(2+) as cofactor.

It is found in the cytoplasm. The enzyme catalyses RNA(n+1) + phosphate = RNA(n) + a ribonucleoside 5'-diphosphate. In terms of biological role, involved in mRNA degradation. Catalyzes the phosphorolysis of single-stranded polyribonucleotides processively in the 3'- to 5'-direction. This Bdellovibrio bacteriovorus (strain ATCC 15356 / DSM 50701 / NCIMB 9529 / HD100) protein is Polyribonucleotide nucleotidyltransferase.